The chain runs to 251 residues: Triosephosphate isomerase (251 aa).

A substrate-binding site is contributed by 9-11; it reads NWK. His95 (electrophile) is an active-site residue. Residue Glu167 is the Proton acceptor of the active site. Substrate contacts are provided by residues Gly173, Ser212, and 233 to 234; that span reads GG.

This sequence belongs to the triosephosphate isomerase family. Homodimer.

The protein resides in the cytoplasm. The enzyme catalyses D-glyceraldehyde 3-phosphate = dihydroxyacetone phosphate. The protein operates within carbohydrate biosynthesis; gluconeogenesis. It participates in carbohydrate degradation; glycolysis; D-glyceraldehyde 3-phosphate from glycerone phosphate: step 1/1. In terms of biological role, involved in the gluconeogenesis. Catalyzes stereospecifically the conversion of dihydroxyacetone phosphate (DHAP) to D-glyceraldehyde-3-phosphate (G3P). The protein is Triosephosphate isomerase of Vibrio sp. (strain ANT-300).